Reading from the N-terminus, the 490-residue chain is Endo-1,6-beta-D-glucanase BGN16.3 (490 aa).

Positions 1–28 (MRYALIASMLGQAAISVAMPSEPAHSPR) are cleaved as a signal peptide. The Proton donor role is filled by Glu-243. Glu-339 acts as the Nucleophile in catalysis.

It belongs to the glycosyl hydrolase 30 family.

It is found in the secreted. The protein resides in the extracellular space. It catalyses the reaction Random hydrolysis of (1-&gt;6)-linkages in (1-&gt;6)-beta-D-glucans.. Its function is as follows. Has highest activity on the linear beta-1,6-glucan pustulan. Lower activity against yeast glucan and laminarin (beta-1,3-glucans with beta-1,6-branches). No activity on colloidal chitin, pachyman, starch, cellulose, nigeran, dextran or gentobiose. This chain is Endo-1,6-beta-D-glucanase BGN16.3, found in Trichoderma harzianum (Hypocrea lixii).